Reading from the N-terminus, the 286-residue chain is Polyamine aminopropyltransferase (286 aa).

The PABS domain occupies 5–238 (TMWHETLHDQ…GIMTFAWATD (234 aa)). Glutamine 33 lines the S-methyl-5'-thioadenosine pocket. Histidine 64 and aspartate 88 together coordinate spermidine. Residues glutamate 108 and 140–141 (DG) each bind S-methyl-5'-thioadenosine. Aspartate 158 functions as the Proton acceptor in the catalytic mechanism. 158 to 161 (DCTD) serves as a coordination point for spermidine. Proline 165 contacts S-methyl-5'-thioadenosine.

It belongs to the spermidine/spermine synthase family. As to quaternary structure, homodimer or homotetramer.

Its subcellular location is the cytoplasm. The enzyme catalyses S-adenosyl 3-(methylsulfanyl)propylamine + putrescine = S-methyl-5'-thioadenosine + spermidine + H(+). The protein operates within amine and polyamine biosynthesis; spermidine biosynthesis; spermidine from putrescine: step 1/1. Functionally, catalyzes the irreversible transfer of a propylamine group from the amino donor S-adenosylmethioninamine (decarboxy-AdoMet) to putrescine (1,4-diaminobutane) to yield spermidine. This is Polyamine aminopropyltransferase from Salmonella enteritidis PT4 (strain P125109).